Reading from the N-terminus, the 464-residue chain is Asparagine--tRNA ligase (464 aa).

Belongs to the class-II aminoacyl-tRNA synthetase family. Homodimer.

Its subcellular location is the cytoplasm. It carries out the reaction tRNA(Asn) + L-asparagine + ATP = L-asparaginyl-tRNA(Asn) + AMP + diphosphate + H(+). This Clostridium beijerinckii (strain ATCC 51743 / NCIMB 8052) (Clostridium acetobutylicum) protein is Asparagine--tRNA ligase.